Consider the following 96-residue polypeptide: MNIRPLHDRVIIKREEVETRSAGGIVLTGSAATKSTRAKVLAVGKGRILENGTVQPLDVKVGDTVIFNDGYGVKAEKIDGEEVLIISENDILAIVE.

This sequence belongs to the GroES chaperonin family. Heptamer of 7 subunits arranged in a ring. Interacts with the chaperonin GroEL.

The protein localises to the cytoplasm. Functionally, together with the chaperonin GroEL, plays an essential role in assisting protein folding. The GroEL-GroES system forms a nano-cage that allows encapsulation of the non-native substrate proteins and provides a physical environment optimized to promote and accelerate protein folding. GroES binds to the apical surface of the GroEL ring, thereby capping the opening of the GroEL channel. In Haemophilus influenzae (strain 86-028NP), this protein is Co-chaperonin GroES.